The primary structure comprises 354 residues: Pyruvate dehydrogenase E1 component subunit alpha (354 aa).

The tract at residues 1–29 (MAKATQDSNRPHKADVGSAIPNHDLPPIP) is disordered.

As to quaternary structure, heterodimer of an alpha and a beta chain. Requires thiamine diphosphate as cofactor.

The enzyme catalyses N(6)-[(R)-lipoyl]-L-lysyl-[protein] + pyruvate + H(+) = N(6)-[(R)-S(8)-acetyldihydrolipoyl]-L-lysyl-[protein] + CO2. Its function is as follows. The pyruvate dehydrogenase complex catalyzes the overall conversion of pyruvate to acetyl-CoA and CO(2). It contains multiple copies of three enzymatic components: pyruvate dehydrogenase (E1), dihydrolipoamide acetyltransferase (E2) and lipoamide dehydrogenase (E3). This is Pyruvate dehydrogenase E1 component subunit alpha (pdhA) from Zymomonas mobilis subsp. mobilis (strain ATCC 31821 / ZM4 / CP4).